We begin with the raw amino-acid sequence, 445 residues long: Phosphoglucosamine mutase (445 aa).

Serine 103 serves as the catalytic Phosphoserine intermediate. The Mg(2+) site is built by serine 103, aspartate 240, aspartate 242, and aspartate 244. A Phosphoserine modification is found at serine 103.

Belongs to the phosphohexose mutase family. Mg(2+) is required as a cofactor. Post-translationally, activated by phosphorylation.

It catalyses the reaction alpha-D-glucosamine 1-phosphate = D-glucosamine 6-phosphate. Catalyzes the conversion of glucosamine-6-phosphate to glucosamine-1-phosphate. The polypeptide is Phosphoglucosamine mutase (Cellvibrio japonicus (strain Ueda107) (Pseudomonas fluorescens subsp. cellulosa)).